We begin with the raw amino-acid sequence, 75 residues long: uncharacterized protein (75 aa).

Residues 7 to 26 (ATAPLFVIVGLAVVLTGATG) form a helical membrane-spanning segment.

The protein localises to the membrane. This is an uncharacterized protein from Dictyostelium discoideum (Social amoeba).